Consider the following 157-residue polypeptide: Protein Smg homolog (157 aa).

The protein belongs to the Smg family.

This is Protein Smg homolog from Xylella fastidiosa (strain M23).